The following is a 103-amino-acid chain: Histone H4 (103 aa).

The span at 1–14 (MTGRGKGGKGLGKG) shows a compositional bias: gly residues. The tract at residues 1 to 20 (MTGRGKGGKGLGKGGAKRHR) is disordered. An N6-acetyl-N6-methyllysine; alternate mark is found at Lys6 and Lys13. The DNA-binding element occupies 17–21 (KRHRK).

Belongs to the histone H4 family. The nucleosome is a histone octamer containing two molecules each of H2A, H2B, H3 and H4 assembled in one H3-H4 heterotetramer and two H2A-H2B heterodimers. The octamer wraps approximately 147 bp of DNA.

It is found in the nucleus. The protein localises to the chromosome. Its function is as follows. Core component of nucleosome. Nucleosomes wrap and compact DNA into chromatin, limiting DNA accessibility to the cellular machineries which require DNA as a template. Histones thereby play a central role in transcription regulation, DNA repair, DNA replication and chromosomal stability. DNA accessibility is regulated via a complex set of post-translational modifications of histones, also called histone code, and nucleosome remodeling. The protein is Histone H4 of Diadromus pulchellus (Parasitic wasp).